Consider the following 353-residue polypeptide: Carbamoyl phosphate synthase small chain (353 aa).

The interval 1–166 (MSDAYLALET…AETHGNGDTT (166 aa)) is CPSase. Residues Ser-45, Gly-214, and Gly-216 each coordinate L-glutamine. Residues 166 to 349 (TVALVDCGAK…LAMADASYTP (184 aa)) form the Glutamine amidotransferase type-1 domain. Cys-241 (nucleophile) is an active-site residue. The L-glutamine site is built by Leu-242, Gln-245, Asn-283, Gly-285, and Tyr-286. Catalysis depends on residues His-322 and Glu-324.

The protein belongs to the CarA family. Composed of two chains; the small (or glutamine) chain promotes the hydrolysis of glutamine to ammonia, which is used by the large (or ammonia) chain to synthesize carbamoyl phosphate. Tetramer of heterodimers (alpha,beta)4.

The catalysed reaction is hydrogencarbonate + L-glutamine + 2 ATP + H2O = carbamoyl phosphate + L-glutamate + 2 ADP + phosphate + 2 H(+). It catalyses the reaction L-glutamine + H2O = L-glutamate + NH4(+). The protein operates within amino-acid biosynthesis; L-arginine biosynthesis; carbamoyl phosphate from bicarbonate: step 1/1. It participates in pyrimidine metabolism; UMP biosynthesis via de novo pathway; (S)-dihydroorotate from bicarbonate: step 1/3. Its function is as follows. Small subunit of the glutamine-dependent carbamoyl phosphate synthetase (CPSase). CPSase catalyzes the formation of carbamoyl phosphate from the ammonia moiety of glutamine, carbonate, and phosphate donated by ATP, constituting the first step of 2 biosynthetic pathways, one leading to arginine and/or urea and the other to pyrimidine nucleotides. The small subunit (glutamine amidotransferase) binds and cleaves glutamine to supply the large subunit with the substrate ammonia. The polypeptide is Carbamoyl phosphate synthase small chain (Halobacterium salinarum (strain ATCC 29341 / DSM 671 / R1)).